Consider the following 395-residue polypeptide: Neuromedin-U receptor 2 (395 aa).

The Extracellular segment spans residues 1–41; sequence MGKLENASWIHDPLMKYLNSTEEYLAHLCGPKRSDLSLPVS. Asn-6 and Asn-19 each carry an N-linked (GlcNAc...) asparagine glycan. The helical transmembrane segment at 42–62 threads the bilayer; the sequence is VAYALIFLVGVMGNLLVCMVI. At 63 to 74 the chain is on the cytoplasmic side; sequence VRHQTLKTPTNY. Residues 75 to 95 form a helical membrane-spanning segment; it reads YLFSLAVSDLLVLLLGMPLEI. Residues 96–115 lie on the Extracellular side of the membrane; sequence YEMWHNYPFLFGPVGCYFKT. Cys-111 and Cys-196 are disulfide-bonded. Residues 116–138 traverse the membrane as a helical segment; it reads ALFETVCFASILSVTTVSVERYV. Residues 139–157 are Cytoplasmic-facing; the sequence is AIVHPFRAKLESTRRRALR. A helical transmembrane segment spans residues 158-178; that stretch reads ILSLVWSFSVVFSLPNTSIHG. At 179 to 212 the chain is on the extracellular side; it reads IKFQHFPNGSSVPGSATCTVTKPMWVYNLIIQAT. Asn-186 carries an N-linked (GlcNAc...) asparagine glycan. The helical transmembrane segment at 213–233 threads the bilayer; the sequence is SFLFYILPMTLISVLYYLMGL. Topologically, residues 234 to 257 are cytoplasmic; it reads RLKRDESLEANKVAVNIHRPSRKS. The helical transmembrane segment at 258 to 278 threads the bilayer; the sequence is VTKMLFVLVLVFAICWTPFHV. Residues 279–293 lie on the Extracellular side of the membrane; it reads DRLFFSFVEEWTESL. Residues 294 to 314 traverse the membrane as a helical segment; that stretch reads AAVFNLIHVVSGVFFYLSSAV. At 315 to 395 the chain is on the cytoplasmic side; sequence NPIIYNLLSR…TTAPCAGEVP (81 aa). The segment at 374 to 395 is disordered; that stretch reads FPGQSSIHNTNLTTAPCAGEVP. Polar residues predominate over residues 375 to 387; that stretch reads PGQSSIHNTNLTT.

The protein belongs to the G-protein coupled receptor 1 family. As to expression, the highest level is detected in the uterus. In the central nervous system, high expression levels were found in the hypothalamus and moderate levels in both the medulla oblongata and spinal cord. Expressed in the hypothalamic paraventricular nucleus (PVN) and suprachiasmatic nuclei (SCN) of the hypothalamus. Expression is low in the gastrointestinal tract. In other peripheral tissues, moderate expression was observed in the lung and ovary.

Its subcellular location is the cell membrane. Receptor for the neuromedin-U and neuromedin-S neuropeptides. This Rattus norvegicus (Rat) protein is Neuromedin-U receptor 2 (Nmur2).